Consider the following 548-residue polypeptide: MEMEKEENVVYGPLPFYPIEEGSAGIQLHKYMHQYAKLGAIAFSNALTGVDISYQEYFDITCRLAEAMKNFGMKPEEHIALCSENCEEFFIPVLAGLYIGVAVAPTNEIYTLRELNHSLGIAQPTIVFSSRKGLPKVLEVQKTVTCIKKIVILDSKVNFGGHDCMETFIKKHVELGFQPSSFVPIDVKNRKQHVALLMNSSGSTGLPKGVRITHEGAVTRFSHAKDPIYGNQVSPGTAILTVVPFHHGFGMFTTLGYFACGYRVVMLTKFDEELFLRTLQDYKCTSVILVPTLFAILNKSELIDKFDLSNLTEIASGGAPLAKEVGEAVARRFNLPGVRQGYGLTETTSAFIITPEGDDKPGASGKVVPLFKVKVIDLDTKKTLGVNRRGEICVKGPSLMLGYSNNPEATRETIDEEGWLHTGDIGYYDEDEHFFIVDRLKSLIKYKGYQVPPAELESVLLQHPNIFDAGVAGVPDPDAGELPGAVVVMEKGKTMTEKEIVDYVNSQVVNHKRLRGGVRFVDEVPKGLTGKIDAKVIREILKKPQAKM.

The short motif at 546–548 is the Microbody targeting signal element; the sequence is AKM.

Belongs to the ATP-dependent AMP-binding enzyme family. In terms of assembly, homodimer. It depends on Mg(2+) as a cofactor.

It is found in the peroxisome. The enzyme catalyses firefly D-luciferin + ATP + O2 = firefly oxyluciferin + hnu + AMP + CO2 + diphosphate. Inhibited by ATP analogs and sodium deoxycholate. Activated by choline-containing phospholipids. Functionally, produces green light with a wavelength of 570 nm. This Luciola mingrelica (Southern Russian firefly) protein is Luciferin 4-monooxygenase.